The sequence spans 261 residues: Segregation and condensation protein A (261 aa).

The protein belongs to the ScpA family. As to quaternary structure, component of a cohesin-like complex composed of ScpA, ScpB and the Smc homodimer, in which ScpA and ScpB bind to the head domain of Smc. The presence of the three proteins is required for the association of the complex with DNA.

It localises to the cytoplasm. Its function is as follows. Participates in chromosomal partition during cell division. May act via the formation of a condensin-like complex containing Smc and ScpB that pull DNA away from mid-cell into both cell halves. This is Segregation and condensation protein A from Desulfitobacterium hafniense (strain DSM 10664 / DCB-2).